The following is a 577-amino-acid chain: F-box-like/WD repeat-containing protein TBL1X (577 aa).

Residues 55–87 enclose the LisH domain; it reads TSDEVNFLVYRYLQESGFSHSAFTFGIESHISQ. Positions 92–137 constitute an F-box-like domain; sequence GTLVPPAALISILQKGLQYVEAEISINEDGTVFDGRPIESLSLIDA. An N6-acetyllysine modification is found at Lys-153. Residues 177 to 202 form a disordered region; sequence TTSAGVSHQNPSKNREATVNGEENRA. Ser-183 bears the Phosphoserine mark. WD repeat units follow at residues 230 to 269, 286 to 325, 327 to 366, 369 to 409, 410 to 449, 452 to 500, 503 to 542, and 544 to 576; these read GHESEVFICAWNPVSDLLASGSGDSTARIWNLNENSNGGS, PSNKDVTSLDWNTNGTLLATGSYDGFARIWTEDGNLASTL, QHKGPIFALKWNRKGNYILSAGVDKTTIIWDAHTGEAKQQ, FHSA…KTFQ, GHTNEVNAIKWDPSGMLLASCSDDMTLKIWSMKQEVCIHD, AHNK…CTHT, KHQEPVYSVAFSPDGKYLASGSFDKCVHIWNTQSGNLVHS, and RGTGGIFEVCWNARGDKVGASASDGSVCVLDLR. A Glycyl lysine isopeptide (Lys-Gly) (interchain with G-Cter in SUMO2) cross-link involves residue Lys-340.

The protein belongs to the WD repeat EBI family. In terms of assembly, homotetramer; dimer of dimers. Component of the N-Cor repressor complex, at least composed of NCOR1, NCOR2, HDAC3, TBL1X, TBL1R, CORO2A and GPS2. Interacts with GPS2 (when sumoylated); leading to protect GPS2 against degradation by the proteasome. Component of a E3 ubiquitin ligase complex containing UBE2D1, SIAH1, CACYBP/SIP, SKP1, APC and TBL1X. Probably part of other corepressor complexes, that do not contain NCOR1 and NCOR2. Interacts with histones H2B, H3a and H4. Interacts with MECP2; recruits TBL1X to the heterochromatin foci. Interacts with USP44. In terms of tissue distribution, ubiquitous.

It is found in the nucleus. In terms of biological role, F-box-like protein involved in the recruitment of the ubiquitin/19S proteasome complex to nuclear receptor-regulated transcription units. Plays an essential role in transcription activation mediated by nuclear receptors. Probably acts as integral component of corepressor complexes that mediates the recruitment of the 19S proteasome complex, leading to the subsequent proteasomal degradation of transcription repressor complexes, thereby allowing cofactor exchange. The sequence is that of F-box-like/WD repeat-containing protein TBL1X (TBL1X) from Homo sapiens (Human).